Here is a 333-residue protein sequence, read N- to C-terminus: Ferrochelatase (333 aa).

Residues His202 and Glu284 each contribute to the Fe cation site.

It belongs to the ferrochelatase family.

Its subcellular location is the cytoplasm. The catalysed reaction is heme b + 2 H(+) = protoporphyrin IX + Fe(2+). It functions in the pathway porphyrin-containing compound metabolism; protoheme biosynthesis; protoheme from protoporphyrin-IX: step 1/1. Catalyzes the ferrous insertion into protoporphyrin IX. The protein is Ferrochelatase of Francisella tularensis subsp. holarctica (strain LVS).